The chain runs to 33 residues: Large ribosomal subunit protein eL21 (33 aa).

It belongs to the eukaryotic ribosomal protein eL21 family. As to quaternary structure, component of the large ribosomal subunit.

It is found in the cytoplasm. Its subcellular location is the cytosol. It localises to the endoplasmic reticulum. In terms of biological role, component of the large ribosomal subunit. The ribosome is a large ribonucleoprotein complex responsible for the synthesis of proteins in the cell. The polypeptide is Large ribosomal subunit protein eL21 (rpl21) (Xenopus laevis (African clawed frog)).